The primary structure comprises 162 residues: NADH-quinone oxidoreductase subunit I (162 aa).

4Fe-4S ferredoxin-type domains are found at residues 52–82 (LRRY…IEAG) and 93–122 (TRYD…EGPN). Cys-62, Cys-65, Cys-68, Cys-72, Cys-102, Cys-105, Cys-108, and Cys-112 together coordinate [4Fe-4S] cluster.

It belongs to the complex I 23 kDa subunit family. In terms of assembly, NDH-1 is composed of 14 different subunits. Subunits NuoA, H, J, K, L, M, N constitute the membrane sector of the complex. The cofactor is [4Fe-4S] cluster.

The protein resides in the cell inner membrane. The catalysed reaction is a quinone + NADH + 5 H(+)(in) = a quinol + NAD(+) + 4 H(+)(out). Its function is as follows. NDH-1 shuttles electrons from NADH, via FMN and iron-sulfur (Fe-S) centers, to quinones in the respiratory chain. The immediate electron acceptor for the enzyme in this species is believed to be ubiquinone. Couples the redox reaction to proton translocation (for every two electrons transferred, four hydrogen ions are translocated across the cytoplasmic membrane), and thus conserves the redox energy in a proton gradient. This is NADH-quinone oxidoreductase subunit I from Methylobacterium nodulans (strain LMG 21967 / CNCM I-2342 / ORS 2060).